The following is a 1487-amino-acid chain: Protein clueless (1487 aa).

Disordered regions lie at residues 1 to 94 (MALE…NGDA) and 110 to 140 (GATA…EAAA). Over residues 56–65 (TKKKGKKNRN) the composition is skewed to basic residues. Positions 111-126 (ATAAAGATEAAAEVGS) are enriched in low complexity. Residue serine 284 is modified to Phosphoserine. The Clu domain occupies 438-680 (RAEDAFSSKL…RTFPPDVNFL (243 aa)). Basic and acidic residues predominate over residues 739 to 785 (QAEKELPSITEKQEEPEKEQAEKSSAEQPEKEKEKEKDKEDEQKESK). Disordered stretches follow at residues 739–794 (QAEK…TKSA) and 980–1040 (VSSE…TAST). Residues 988-1005 (KQSRNNGGKHNKHNKSNK) show a composition bias toward basic residues. A compositionally biased stretch (polar residues) spans 1009–1019 (PQSTSAAAATQ). Low complexity predominate over residues 1020–1040 (NGHSSTAANGSANSAANTAST). TPR repeat units follow at residues 1140-1173 (AYNF…LNNV), 1266-1299 (ALID…NLKY), and 1301-1334 (GNKA…EKET). Residues 1456 to 1487 (DTEQPKEGSEVEGATATQLTNGSEDSTTTVSS) are disordered. Over residues 1470–1487 (TATQLTNGSEDSTTTVSS) the composition is skewed to polar residues.

It belongs to the CLU family.

It is found in the cytoplasm. In terms of biological role, mRNA-binding protein involved in proper cytoplasmic distribution of mitochondria. In Drosophila mojavensis (Fruit fly), this protein is Protein clueless.